The primary structure comprises 803 residues: Volume-regulated anion channel subunit LRRC8B (803 aa).

The Cytoplasmic portion of the chain corresponds to 1–25 (MITLTELKCLADAQSSYHILKPWWD). A helical membrane pass occupies residues 26–46 (VFWYYITLIMLLVAVLAGALQ). The Extracellular portion of the chain corresponds to 47 to 119 (LTQSRVLCCL…YEKQLHWFAK (73 aa)). Disulfide bonds link C55–C304 and C109–C289. A glycan (N-linked (GlcNAc...) asparagine) is linked at N78. A helical transmembrane segment spans residues 120–140 (FFPYLVLLHTLIFAACSNFWL). Residues 141 to 261 (HYPSTSSRLE…DIIYRVYLKQ (121 aa)) are Cytoplasmic-facing. Phosphoserine occurs at positions 186 and 196. Residues 262–282 (IIVKVILFVLIITYVPYFLSY) traverse the membrane as a helical segment. The Extracellular segment spans residues 283 to 307 (ITLEIDCSIDVQAFTGYKRYQCVYS). The helical transmembrane segment at 308 to 328 (LAEIFKVLASFYVILVMLYGL) threads the bilayer. At 329 to 803 (TSSYSLWWML…ERLQTCLDKC (475 aa)) the chain is on the cytoplasmic side. LRR repeat units follow at residues 415-439 (VKNSQDKVELHLFMLNGLPDNVFEL), 440-462 (TEMEVLSLELIPEVKLPAAVAQL), 464-486 (NLRELHVYHSSLVVDHPALAFLE), 488-509 (NLRILRLKFTEMGKIPRWVFHL), 511-532 (NLKELYLSGCVLPEQLSSLHLE), 539-559 (NLRTLYLKSSLSRIPQVVTDL), 562-582 (SLQKLSLDNEGSKLVVLNNLK), 586-607 (NLKSLELLSCDLERIPHSIFSL), 609-630 (NLHELDLKENNLKTVEEIISFQ), 634-655 (SLSCLKLWHNNIAYIPAQIGAL), 657-678 (NLEQLFLGHNNIESLPLQLFLC), 680-701 (KLHYLDLSYNHLTFIPEEIQYL), 703-724 (NLQYFAVTNNNIEMLPDGLFQC), 726-747 (KLQCLLLGRNSLTDLSPLVGEL), and 749-771 (NLTHLELTGNYLETLPVELEGCQ).

The protein belongs to the LRRC8 family. In terms of assembly, heterohexamer; oligomerizes with other LRRC8 proteins (LRRC8A, LRRC8C, LRRC8D and/or LRRC8E) to form a heterohexamer. In vivo, the subunit composition may depend primarily on expression levels, and heterooligomeric channels containing various proportions of the different LRRC8 proteins may coexist.

The protein resides in the cell membrane. Its subcellular location is the endoplasmic reticulum membrane. The enzyme catalyses chloride(in) = chloride(out). It catalyses the reaction iodide(out) = iodide(in). It carries out the reaction taurine(out) = taurine(in). Non-essential component of the volume-regulated anion channel (VRAC, also named VSOAC channel), an anion channel required to maintain a constant cell volume in response to extracellular or intracellular osmotic changes. The VRAC channel conducts iodide better than chloride and can also conduct organic osmolytes like taurine. Channel activity requires LRRC8A plus at least one other family member (LRRC8B, LRRC8C, LRRC8D or LRRC8E); channel characteristics depend on the precise subunit composition. The chain is Volume-regulated anion channel subunit LRRC8B from Mus musculus (Mouse).